The sequence spans 255 residues: NAD-dependent protein deacylase (255 aa).

One can recognise a Deacetylase sirtuin-type domain in the interval 1 to 253 (MIEEAPRIIA…VKVKRCLENK (253 aa)). 20 to 39 (GAGVSAESGIPTFRDRGGLW) provides a ligand contact to NAD(+). 2 residues coordinate substrate: Y64 and R67. 98 to 101 (QNID) lines the NAD(+) pocket. The Proton acceptor role is filled by H116. Zn(2+) contacts are provided by C124, C127, C151, and C154. NAD(+) contacts are provided by residues 191–193 (GTS), 217–219 (NTK), and A235.

This sequence belongs to the sirtuin family. Class III subfamily. Requires Zn(2+) as cofactor.

It is found in the cytoplasm. The enzyme catalyses N(6)-acetyl-L-lysyl-[protein] + NAD(+) + H2O = 2''-O-acetyl-ADP-D-ribose + nicotinamide + L-lysyl-[protein]. The catalysed reaction is N(6)-succinyl-L-lysyl-[protein] + NAD(+) + H2O = 2''-O-succinyl-ADP-D-ribose + nicotinamide + L-lysyl-[protein]. NAD-dependent lysine deacetylase and desuccinylase that specifically removes acetyl and succinyl groups on target proteins. Modulates the activities of several proteins which are inactive in their acylated form. Deacetylates the N-terminal lysine residue of Alba, the major archaeal chromatin protein and that, in turn, increases Alba's DNA binding affinity, thereby repressing transcription. This is NAD-dependent protein deacylase from Thermococcus sibiricus (strain DSM 12597 / MM 739).